Consider the following 233-residue polypeptide: Putative glutathione peroxidase 7, chloroplastic (233 aa).

The transit peptide at 1 to 69 (MAFSYASFST…KSKNFSVYAR (69 aa)) directs the protein to the chloroplast. Cys108 is an active-site residue.

Belongs to the glutathione peroxidase family.

It localises to the plastid. The protein resides in the chloroplast. It catalyses the reaction 2 glutathione + H2O2 = glutathione disulfide + 2 H2O. In terms of biological role, may constitute a glutathione peroxidase-like protective system against oxidative stresses. The protein is Putative glutathione peroxidase 7, chloroplastic (GPX7) of Arabidopsis thaliana (Mouse-ear cress).